A 609-amino-acid chain; its full sequence is Chaperone protein DnaK (609 aa).

A Phosphothreonine; by autocatalysis modification is found at T172. The tract at residues 578–609 (QAQAQQQAGAGGAAKKDENVVDAEFEEVKDDK) is disordered. Positions 597 to 609 (VVDAEFEEVKDDK) are enriched in acidic residues.

The protein belongs to the heat shock protein 70 family.

In terms of biological role, acts as a chaperone. The polypeptide is Chaperone protein DnaK (Geobacillus sp. (strain WCH70)).